The following is a 29-amino-acid chain: Putative membrane protein PmrR (29 aa).

The helical transmembrane segment at 5 to 27 (VYESLTTVFSVLVVSSFLYIWFA) threads the bilayer.

It is found in the cell inner membrane. In terms of biological role, may bind to BasS and modulate its sensor kinase activity. In Escherichia coli (strain K12), this protein is Putative membrane protein PmrR (pmrR).